Consider the following 462-residue polypeptide: CCA-adding enzyme (462 aa).

Residues serine 54 and arginine 57 each coordinate ATP. Residues serine 54 and arginine 57 each coordinate CTP. Positions 66, 68, and 117 each coordinate Mg(2+). ATP-binding residues include histidine 140, lysine 160, and tyrosine 169. The CTP site is built by histidine 140, lysine 160, and tyrosine 169.

This sequence belongs to the tRNA nucleotidyltransferase/poly(A) polymerase family. Archaeal CCA-adding enzyme subfamily. Homodimer. The cofactor is Mg(2+).

It catalyses the reaction a tRNA precursor + 2 CTP + ATP = a tRNA with a 3' CCA end + 3 diphosphate. The catalysed reaction is a tRNA with a 3' CCA end + 2 CTP + ATP = a tRNA with a 3' CCACCA end + 3 diphosphate. Functionally, catalyzes the addition and repair of the essential 3'-terminal CCA sequence in tRNAs without using a nucleic acid template. Adds these three nucleotides in the order of C, C, and A to the tRNA nucleotide-73, using CTP and ATP as substrates and producing inorganic pyrophosphate. tRNA 3'-terminal CCA addition is required both for tRNA processing and repair. Also involved in tRNA surveillance by mediating tandem CCA addition to generate a CCACCA at the 3' terminus of unstable tRNAs. While stable tRNAs receive only 3'-terminal CCA, unstable tRNAs are marked with CCACCA and rapidly degraded. The protein is CCA-adding enzyme of Halorubrum lacusprofundi (strain ATCC 49239 / DSM 5036 / JCM 8891 / ACAM 34).